A 130-amino-acid polypeptide reads, in one-letter code: MAKLSTDELLDAFKEMTLLELSEFVKQFEETFDVTAAAPVAVAAAGPAAGGGAAEAAEEQSEFDVILEGAGEKKIGVIKVVREIVSGLGLKEAKDLVDSAPKPLLEKVNKEAAEDAKAKLEAAGASVTVK.

This sequence belongs to the bacterial ribosomal protein bL12 family. As to quaternary structure, homodimer. Part of the ribosomal stalk of the 50S ribosomal subunit. Forms a multimeric L10(L12)X complex, where L10 forms an elongated spine to which 2 to 4 L12 dimers bind in a sequential fashion. Binds GTP-bound translation factors.

Forms part of the ribosomal stalk which helps the ribosome interact with GTP-bound translation factors. Is thus essential for accurate translation. In Mycolicibacterium gilvum (strain PYR-GCK) (Mycobacterium gilvum (strain PYR-GCK)), this protein is Large ribosomal subunit protein bL12.